Here is a 287-residue protein sequence, read N- to C-terminus: Elongation factor Ts (287 aa).

An involved in Mg(2+) ion dislocation from EF-Tu region spans residues 80 to 83; sequence TDFL.

The protein belongs to the EF-Ts family.

It localises to the cytoplasm. In terms of biological role, associates with the EF-Tu.GDP complex and induces the exchange of GDP to GTP. It remains bound to the aminoacyl-tRNA.EF-Tu.GTP complex up to the GTP hydrolysis stage on the ribosome. This Pseudomonas fluorescens (strain Pf0-1) protein is Elongation factor Ts.